Reading from the N-terminus, the 411-residue chain is MRAERTSFLLALGLLMAGIRSVHCLPENVVVKDQRRRVDSHTLASSNTDFAFSLYKQLALKNPNKNVMFSPLSVSMALAFLSLGARGPTLTEILEGLKFNLTEIQETQIHQGFQHLLQALNRPSNQLQLSVGNAMFVQEELKLLDKFIEDARVLYSSEAFPTNFRDSEAARSLINDYVKNKTQGKIEELFKYLSPRTVLVLVNYIYFKAQWKTRFDPKHTEQAEFHVSKNKTVEVPMMTLDLETPYFRDKELGCMLVELTYSSNDSALFILPDEGKMQDLEAKLTPETLTRWRNSLQPRRIHELYLPKFSIKSNYELNDTLSQMGIKKIFTDADLSGITGTADLVVSQVVHGAALDVDEEGTEGAAATGIGIERTFLRIIVRVNRPFLIAVVLKDTQSIIFLGKVTNPSEA.

The N-terminal stretch at methionine 1–cysteine 24 is a signal peptide. 5 N-linked (GlcNAc...) asparagine glycosylation sites follow: asparagine 100, asparagine 180, asparagine 230, asparagine 264, and asparagine 318.

The protein belongs to the serpin family. Homodimer.

The protein localises to the cytoplasmic vesicle. The protein resides in the secretory vesicle. It localises to the chromaffin granule. It is found in the secreted. In terms of biological role, serine protease inhibitor. The sequence is that of Serpin A3-5 from Bos taurus (Bovine).